We begin with the raw amino-acid sequence, 32 residues long: uncharacterized protein (32 aa).

This is an uncharacterized protein from Haemophilus influenzae (strain ATCC 51907 / DSM 11121 / KW20 / Rd).